The sequence spans 216 residues: MLTIALPKGALLNESIQIFQKIGLDFSAFLDSKNRQLQITDPTNQAKALLVRATDVPVYVEYGQAQLGIAGYDVLLEKSPDVANLIDLKFGYCRMSVAVPADSPYQSPLDIPHHGKVASKFVNCAKDYFRRLDIPVEIIPLYGSVELGPITGMSEAIVDLVSTGRTLRENGLVEIDELFASSARLIAHPLSYRLDRDQIYNWVEKLREPTTSMAKV.

This sequence belongs to the ATP phosphoribosyltransferase family. Short subfamily. As to quaternary structure, heteromultimer composed of HisG and HisZ subunits.

It is found in the cytoplasm. The enzyme catalyses 1-(5-phospho-beta-D-ribosyl)-ATP + diphosphate = 5-phospho-alpha-D-ribose 1-diphosphate + ATP. It functions in the pathway amino-acid biosynthesis; L-histidine biosynthesis; L-histidine from 5-phospho-alpha-D-ribose 1-diphosphate: step 1/9. Its function is as follows. Catalyzes the condensation of ATP and 5-phosphoribose 1-diphosphate to form N'-(5'-phosphoribosyl)-ATP (PR-ATP). Has a crucial role in the pathway because the rate of histidine biosynthesis seems to be controlled primarily by regulation of HisG enzymatic activity. The sequence is that of ATP phosphoribosyltransferase from Microcystis aeruginosa (strain NIES-843 / IAM M-2473).